We begin with the raw amino-acid sequence, 83 residues long: Protein FAM240A (83 aa).

The protein belongs to the FAM240 family.

This chain is Protein FAM240A, found in Homo sapiens (Human).